The chain runs to 206 residues: Large ribosomal subunit protein uL4 (206 aa).

Residues 46–78 are disordered; sequence GNRAQKDREQVKHTTKKPWRQKGTGRARAGMSS. Residues 58–70 show a composition bias toward basic residues; the sequence is HTTKKPWRQKGTG.

This sequence belongs to the universal ribosomal protein uL4 family. In terms of assembly, part of the 50S ribosomal subunit.

Functionally, one of the primary rRNA binding proteins, this protein initially binds near the 5'-end of the 23S rRNA. It is important during the early stages of 50S assembly. It makes multiple contacts with different domains of the 23S rRNA in the assembled 50S subunit and ribosome. In terms of biological role, forms part of the polypeptide exit tunnel. The sequence is that of Large ribosomal subunit protein uL4 from Burkholderia cenocepacia (strain ATCC BAA-245 / DSM 16553 / LMG 16656 / NCTC 13227 / J2315 / CF5610) (Burkholderia cepacia (strain J2315)).